The following is a 57-amino-acid chain: MNIEELKKQAETEIADFIAQKIAELNKNTGKEVSEIRFTAREKMTGLESYDVKIKIM.

This sequence belongs to the gns family.

The chain is Protein GnsA (gnsA) from Escherichia coli O6:H1 (strain CFT073 / ATCC 700928 / UPEC).